Consider the following 122-residue polypeptide: Large ribosomal subunit protein uL14 (122 aa).

It belongs to the universal ribosomal protein uL14 family. As to quaternary structure, part of the 50S ribosomal subunit. Forms a cluster with proteins L3 and L19. In the 70S ribosome, L14 and L19 interact and together make contacts with the 16S rRNA in bridges B5 and B8.

Its function is as follows. Binds to 23S rRNA. Forms part of two intersubunit bridges in the 70S ribosome. This is Large ribosomal subunit protein uL14 from Parafrankia sp. (strain EAN1pec).